A 187-amino-acid polypeptide reads, in one-letter code: Interferon alpha-3 (187 aa).

The first 23 residues, 1-23 (MALPCSFSVALVLLSCHSLCCLA), serve as a signal peptide directing secretion. Cystine bridges form between cysteine 24/cysteine 122 and cysteine 52/cysteine 160. 2 N-linked (GlcNAc...) asparagine glycosylation sites follow: asparagine 94 and asparagine 101.

This sequence belongs to the alpha/beta interferon family.

The protein localises to the secreted. Functionally, produced by macrophages, IFN-alpha have antiviral activities. Interferon stimulates the production of two enzymes: a protein kinase and an oligoadenylate synthetase. The chain is Interferon alpha-3 from Canis lupus familiaris (Dog).